Here is a 311-residue protein sequence, read N- to C-terminus: Elongation factor Ts (311 aa).

Residues 81-84 are involved in Mg(2+) ion dislocation from EF-Tu; that stretch reads TDFV.

It belongs to the EF-Ts family.

Its subcellular location is the cytoplasm. Functionally, associates with the EF-Tu.GDP complex and induces the exchange of GDP to GTP. It remains bound to the aminoacyl-tRNA.EF-Tu.GTP complex up to the GTP hydrolysis stage on the ribosome. The sequence is that of Elongation factor Ts from Trichlorobacter lovleyi (strain ATCC BAA-1151 / DSM 17278 / SZ) (Geobacter lovleyi).